We begin with the raw amino-acid sequence, 381 residues long: Queuine tRNA-ribosyltransferase (381 aa).

Catalysis depends on Asp-103, which acts as the Proton acceptor. Substrate contacts are provided by residues 103-107 (DSGGF), Asp-157, Gln-200, and Gly-227. Positions 258–264 (GVGTYRE) are RNA binding. Asp-277 serves as the catalytic Nucleophile. The RNA binding; important for wobble base 34 recognition stretch occupies residues 282 to 286 (TRLAR). Cys-315, Cys-317, Cys-320, and His-346 together coordinate Zn(2+).

It belongs to the queuine tRNA-ribosyltransferase family. In terms of assembly, homodimer. Within each dimer, one monomer is responsible for RNA recognition and catalysis, while the other monomer binds to the replacement base PreQ1. Zn(2+) is required as a cofactor.

The enzyme catalyses 7-aminomethyl-7-carbaguanine + guanosine(34) in tRNA = 7-aminomethyl-7-carbaguanosine(34) in tRNA + guanine. Its pathway is tRNA modification; tRNA-queuosine biosynthesis. Its function is as follows. Catalyzes the base-exchange of a guanine (G) residue with the queuine precursor 7-aminomethyl-7-deazaguanine (PreQ1) at position 34 (anticodon wobble position) in tRNAs with GU(N) anticodons (tRNA-Asp, -Asn, -His and -Tyr). Catalysis occurs through a double-displacement mechanism. The nucleophile active site attacks the C1' of nucleotide 34 to detach the guanine base from the RNA, forming a covalent enzyme-RNA intermediate. The proton acceptor active site deprotonates the incoming PreQ1, allowing a nucleophilic attack on the C1' of the ribose to form the product. After dissociation, two additional enzymatic reactions on the tRNA convert PreQ1 to queuine (Q), resulting in the hypermodified nucleoside queuosine (7-(((4,5-cis-dihydroxy-2-cyclopenten-1-yl)amino)methyl)-7-deazaguanosine). The sequence is that of Queuine tRNA-ribosyltransferase from Cyanothece sp. (strain PCC 7425 / ATCC 29141).